Reading from the N-terminus, the 226-residue chain is Guanylate kinase (226 aa).

The region spanning 13–193 (GLLLVLSAPS…ALAQLQAIVR (181 aa)) is the Guanylate kinase-like domain. 20–27 (APSGAGKT) contributes to the ATP binding site.

The protein belongs to the guanylate kinase family.

Its subcellular location is the cytoplasm. The enzyme catalyses GMP + ATP = GDP + ADP. Its function is as follows. Essential for recycling GMP and indirectly, cGMP. This Anaeromyxobacter dehalogenans (strain 2CP-C) protein is Guanylate kinase.